The following is a 158-amino-acid chain: MFMSSIIELVTAAITPAIQTPYELVDVEYGKMGGDYVLSIFVDKEGGISLQDTADLSEKISPILDTIKPDPFPDQYMLEVTSPGLERPLKTADAVEKAVGKYIHVKLYQAIDKIKVFEGTLLSFDGTDLIMEYMDKTRKKEVTIPYQTVAKARLAVKL.

The protein belongs to the RimP family.

It localises to the cytoplasm. Its function is as follows. Required for maturation of 30S ribosomal subunits. This is Ribosome maturation factor RimP from Streptococcus suis (strain 98HAH33).